We begin with the raw amino-acid sequence, 273 residues long: Ribosomal RNA small subunit methyltransferase I (273 aa).

The protein belongs to the methyltransferase superfamily. RsmI family.

The protein resides in the cytoplasm. The enzyme catalyses cytidine(1402) in 16S rRNA + S-adenosyl-L-methionine = 2'-O-methylcytidine(1402) in 16S rRNA + S-adenosyl-L-homocysteine + H(+). Its function is as follows. Catalyzes the 2'-O-methylation of the ribose of cytidine 1402 (C1402) in 16S rRNA. This chain is Ribosomal RNA small subunit methyltransferase I, found in Xylella fastidiosa (strain Temecula1 / ATCC 700964).